Consider the following 330-residue polypeptide: Tryptophan--tRNA ligase (330 aa).

Residues 9–11 (QPT) and 17–18 (GN) each bind ATP. Positions 10 to 18 (PTGDPHIGN) match the 'HIGH' region motif. Asp-136 is an L-tryptophan binding site. Residues 148–150 (GED), Ile-187, and 195–199 (KMSKS) contribute to the ATP site. Positions 195–199 (KMSKS) match the 'KMSKS' region motif.

Belongs to the class-I aminoacyl-tRNA synthetase family. As to quaternary structure, homodimer.

The protein resides in the cytoplasm. It carries out the reaction tRNA(Trp) + L-tryptophan + ATP = L-tryptophyl-tRNA(Trp) + AMP + diphosphate + H(+). In terms of biological role, catalyzes the attachment of tryptophan to tRNA(Trp). The polypeptide is Tryptophan--tRNA ligase (Deinococcus radiodurans (strain ATCC 13939 / DSM 20539 / JCM 16871 / CCUG 27074 / LMG 4051 / NBRC 15346 / NCIMB 9279 / VKM B-1422 / R1)).